The chain runs to 508 residues: Photosystem II CP47 reaction center protein (508 aa).

6 consecutive transmembrane segments (helical) span residues 21–36 (SVHI…WAGS), 101–115 (IVFS…IWHW), 140–156 (GIHL…FGAF), 203–218 (IAAG…FHLS), 237–252 (VLSS…AFVV), and 457–472 (SFAL…HGAR).

This sequence belongs to the PsbB/PsbC family. PsbB subfamily. PSII is composed of 1 copy each of membrane proteins PsbA, PsbB, PsbC, PsbD, PsbE, PsbF, PsbH, PsbI, PsbJ, PsbK, PsbL, PsbM, PsbT, PsbX, PsbY, PsbZ, Psb30/Ycf12, at least 3 peripheral proteins of the oxygen-evolving complex and a large number of cofactors. It forms dimeric complexes. The cofactor is Binds multiple chlorophylls. PSII binds additional chlorophylls, carotenoids and specific lipids..

The protein localises to the plastid. It localises to the chloroplast thylakoid membrane. Functionally, one of the components of the core complex of photosystem II (PSII). It binds chlorophyll and helps catalyze the primary light-induced photochemical processes of PSII. PSII is a light-driven water:plastoquinone oxidoreductase, using light energy to abstract electrons from H(2)O, generating O(2) and a proton gradient subsequently used for ATP formation. The sequence is that of Photosystem II CP47 reaction center protein from Atropa belladonna (Belladonna).